Here is a 65-residue protein sequence, read N- to C-terminus: MPKIKTNRGAAKRFKRTGSGGFKCVQSHRRHILTKKSTKRKRQLRSPDMVHPSDVRAVARMLPYT.

The disordered stretch occupies residues 1–52 (MPKIKTNRGAAKRFKRTGSGGFKCVQSHRRHILTKKSTKRKRQLRSPDMVHP). Over residues 26-44 (QSHRRHILTKKSTKRKRQL) the composition is skewed to basic residues.

Belongs to the bacterial ribosomal protein bL35 family.

The polypeptide is Large ribosomal subunit protein bL35 (Methylococcus capsulatus (strain ATCC 33009 / NCIMB 11132 / Bath)).